Consider the following 285-residue polypeptide: MTTLTHRTRRTEVSKSSEKKIESEEDTNQERSPDNEDPGDSKDIRLTLMEEVLLLGLKDKEGYTSFWNDCISSGLRGGILIELAMRGRIYLEPPTMRKKRLLDRKVLLKSDSPTGDVLLDETLKHIKATEPTETVQTWIELLTGETWNPFKLQYQLRNVRERIAKNLVEKGILTTEKQNFLLFDMTTHPVTNTTEKQRLMKKLQDSVLERWVNDPQRMDRRTLALLVLAHSSDVLENVFSCLTDDKYDVAMNRTKDLVELDPEVEGTKHNATEMIWAVLAAFNKS.

Positions 1 to 43 (MTTLTHRTRRTEVSKSSEKKIESEEDTNQERSPDNEDPGDSKD) are disordered. The span at 10–43 (RTEVSKSSEKKIESEEDTNQERSPDNEDPGDSKD) shows a compositional bias: basic and acidic residues. Residues Trp-67 and Arg-76 each coordinate a 1,2-diacyl-sn-glycero-3-phospho-(1D-myo-inositol 4-phosphate). Ser-112 carries the post-translational modification Phosphoserine. A 1,2-diacyl-sn-glycero-3-phospho-(1D-myo-inositol 4-phosphate) is bound by residues Arg-157 and Arg-160. The tract at residues 176–187 (EKQNFLLFDMTT) is beta-hairpin required for oligomerization.

It belongs to the GOLPH3/VPS74 family. As to quaternary structure, homooligomer. Does not interact MYO18; differs from GOLPH3 by its inability to interact with MYO18. May interact with ARF1. Expressed in a subset of tissues tested with higher expression in salivary gland, small intestine and skin (at protein level).

It localises to the golgi apparatus. Its subcellular location is the golgi stack membrane. The protein resides in the trans-Golgi network membrane. Phosphatidylinositol-4-phosphate-binding protein that may antagonize the action of GOLPH3 which is required for the process of vesicle budding at the Golgi and anterograde transport to the plasma membrane. The chain is Golgi phosphoprotein 3-like (Golph3l) from Mus musculus (Mouse).